Here is a 750-residue protein sequence, read N- to C-terminus: Catalase-peroxidase 1 (750 aa).

A cross-link (tryptophyl-tyrosyl-methioninium (Trp-Tyr) (with M-264)) is located at residues 90–238; that stretch reads WHSAGTYRVM…VSAAHMGLIY (149 aa). Histidine 91 (proton acceptor) is an active-site residue. The segment at 199–218 is disordered; the sequence is NEGHKESGVIDGSESKKGHK. The segment covering 200–218 has biased composition (basic and acidic residues); sequence EGHKESGVIDGSESKKGHK. Residues 238-264 constitute a cross-link (tryptophyl-tyrosyl-methioninium (Tyr-Met) (with W-90)); it reads YVNPEGPDGIPDPVAAARDIRTTFSRM. Histidine 279 contributes to the heme b binding site.

This sequence belongs to the peroxidase family. Peroxidase/catalase subfamily. As to quaternary structure, homodimer or homotetramer. Predominantly homodimeric. Requires heme b as cofactor. Post-translationally, formation of the three residue Trp-Tyr-Met cross-link is important for the catalase, but not the peroxidase activity of the enzyme.

The protein localises to the cytoplasm. The catalysed reaction is H2O2 + AH2 = A + 2 H2O. It carries out the reaction 2 H2O2 = O2 + 2 H2O. Functionally, bifunctional enzyme with both catalase and broad-spectrum peroxidase activity. In Pyricularia oryzae (strain 70-15 / ATCC MYA-4617 / FGSC 8958) (Rice blast fungus), this protein is Catalase-peroxidase 1.